Reading from the N-terminus, the 418-residue chain is Histidine--tRNA ligase (418 aa).

Belongs to the class-II aminoacyl-tRNA synthetase family.

It is found in the cytoplasm. It carries out the reaction tRNA(His) + L-histidine + ATP = L-histidyl-tRNA(His) + AMP + diphosphate + H(+). This Methanococcus maripaludis (strain C6 / ATCC BAA-1332) protein is Histidine--tRNA ligase.